We begin with the raw amino-acid sequence, 980 residues long: Vacuolar protein sorting-associated protein 11 homolog (980 aa).

The CHCR repeat unit spans residues 407–554; that stretch reads YKETIGMLEP…GRDLLIHARD (148 aa). The segment at 803–843 adopts an RING-type; atypical zinc-finger fold; the sequence is CSACDTPLQLPTVHFLCKHAYHVHCFESYNMDGSDKCPACQ. The span at 886–898 shows a compositional bias: basic and acidic residues; sequence TKKTKKSEAKKDP. Residues 886–980 are disordered; that stretch reads TKKTKKSEAK…APAPSTNPFD (95 aa). 2 stretches are compositionally biased toward polar residues: residues 917-937 and 947-960; these read TTIS…SRQR and TNPF…TRLS.

The protein belongs to the VPS11 family. As to quaternary structure, probable core component of at least two putative endosomal tethering complexes, the homotypic fusion and vacuole protein sorting (HOPS) complex and the class C core vacuole/endosome tethering (CORVET) complex. Their common core is composed of the class C Vps proteins vps-11, vps-16 and vps-18, which in HOPS further associates with vps-33.1, vps-39 and vps-41 and in CORVET with vps-8 and vps-33.2.

The protein resides in the late endosome membrane. It is found in the lysosome membrane. Plays a role in vesicle-mediated protein trafficking to lysosomal compartments including the endocytic membrane transport pathways. Believed to act as a core component of the putative HOPS and CORVET endosomal tethering complexes which are proposed to be involved in the rab-5-to-rab-7 endosome conversion probably implicating sand-1, and via binding SNAREs and SNARE complexes to mediate tethering and docking events during SNARE-mediated membrane fusion. The HOPS complex is proposed to be recruited to Rab7 on the late endosomal membrane and to regulate late endocytic, phagocytic and autophagic traffic towards lysosomes. Within the HOPS complex, contributes to the normal development of gut granules in embryonic and adult intestinal cells. The CORVET complex is proposed to function as a Rab5 effector to mediate early endosome fusion probably in specific endosome subpopulations. Required for fusion of endosomes and autophagosomes with lysosomes. Involved in cargo transport from early to late endosomes and required for the transition from early to late endosomes. Possibly has a role in clearance of apoptotic cells during programmed cell death. This is Vacuolar protein sorting-associated protein 11 homolog from Caenorhabditis elegans.